A 415-amino-acid polypeptide reads, in one-letter code: Ornithine cyclodeaminase (415 aa).

NAD(+)-binding residues include Asn241, Ala242, Asp320, Thr352, Leu354, His355, Asp373, Asp396, and Val397.

The protein belongs to the AgrE/ArgZ ornithine cyclodeaminase family. The cofactor is NAD(+).

The catalysed reaction is L-ornithine = L-proline + NH4(+). Functionally, catalyzes the conversion of ornithine to proline, with the release of ammonia. The polypeptide is Ornithine cyclodeaminase (Methanococcus maripaludis (strain DSM 14266 / JCM 13030 / NBRC 101832 / S2 / LL)).